Consider the following 393-residue polypeptide: Cyclic GMP-AMP synthase-like receptor 1 (393 aa).

Mg(2+) contacts are provided by glutamate 89, aspartate 91, and aspartate 205. 89–91 (EFD) lines the ATP pocket. GTP contacts are provided by residues aspartate 205 and 251–258 (RASFYEAE). ATP contacts are provided by residues 255–258 (YEAE), lysine 276, and 289–293 (SYHIK).

This sequence belongs to the mab-21 family. The cofactor is Mg(2+). Mn(2+) is required as a cofactor.

It carries out the reaction GTP + ATP = 3',2'-cGAMP + 2 diphosphate. The catalysed reaction is GTP + ATP = pppA(2'-5')pG + diphosphate. The enzyme catalyses pppA(2'-5')pG = 3',2'-cGAMP + diphosphate. Its activity is regulated as follows. The enzyme activity is specifically activated by double-stranded RNA (dsRNA). Recognizes long dsRNA (&gt;30 bp) with no preference for 5' RNA phosphorylation. Its function is as follows. Nucleotidyltransferase that catalyzes the formation of cyclic GMP-AMP (3',2'-cGAMP) from ATP and GTP and plays a key role in innate immunity. Synthesizes 3',2'-cGAMP in a two-step reaction through production of the linear intermediate pppA(2'-5')pG. Acts as a key sensor of double-stranded RNA (dsRNA), the presence of dsRNA in the cytoplasm being a danger signal that triggers the immune responses. Directly binds dsRNA longer than 35 bp, activating the nucleotidyltransferase activity, leading to synthesis of 3',2'-cGAMP, a second messenger that binds to and activates Sting, thereby triggering the antiviral immune response via activation of the NF-kappa-B transcription factor Rel (Relish). This Drosophila simulans (Fruit fly) protein is Cyclic GMP-AMP synthase-like receptor 1.